The primary structure comprises 384 residues: Probable protein phosphatase 2C 48 (384 aa).

Residues 47-358 enclose the PPM-type phosphatase domain; sequence ITGEFSMAVV…DDITVIVVFL (312 aa). Position 78 is a phosphoserine (Ser78). Mn(2+) contacts are provided by Asp89, Gly90, Asp290, and Asp349.

The protein belongs to the PP2C family. Mg(2+) is required as a cofactor. It depends on Mn(2+) as a cofactor.

It catalyses the reaction O-phospho-L-seryl-[protein] + H2O = L-seryl-[protein] + phosphate. It carries out the reaction O-phospho-L-threonyl-[protein] + H2O = L-threonyl-[protein] + phosphate. May dephosphorylate and repress plasma membrane H(+)-ATPases (PM H(+)-ATPases, e.g. AHA1 and AHA2), thus influencing negatively plant growth and fitness. This chain is Probable protein phosphatase 2C 48, found in Arabidopsis thaliana (Mouse-ear cress).